We begin with the raw amino-acid sequence, 499 residues long: Sialic acid-binding Ig-like lectin 8 (499 aa).

The first 16 residues, 1–16 (MLLLLLLLPLLWGTKG), serve as a signal peptide directing secretion. Over 17 to 363 (MEGDRQYGDG…RPVSQVTLAA (347 aa)) the chain is Extracellular. Residues Y23, 72–75 (RPYQ), R125, and 134–138 (SYKSQ) each bind a carbohydrate. The 84-residue stretch at 40 to 123 (GLCVHVPCSF…ARKRDKGSYF (84 aa)) folds into the Ig-like V-type domain. 3 disulfide bridges follow: C42/C181, C47/C107, and C175/C224. Ig-like C2-type domains are found at residues 157–240 (PDIL…STVR) and 246–344 (PPWN…LSLS). An N-linked (GlcNAc...) asparagine glycan is attached at N172. N-linked (GlcNAc...) asparagine glycans are attached at residues N249 and N267. A disulfide bridge links C283 with C328. Residues 364–384 (VGGAGATALAFLSFCIIFIIV) form a helical membrane-spanning segment. At 385–499 (RSCRKKSARP…HNPSSKEVRG (115 aa)) the chain is on the cytoplasmic side. The tract at residues 410–443 (RGSASQGPLTESWKDGNPLKKPPPAVAPSSGEEG) is disordered. The short motif at 445–450 (LHYATL) is the ITIM motif element. 2 disordered regions span residues 451 to 470 (SFHK…DSEY) and 478 to 499 (RETA…EVRG). Positions 468–473 (SEYSEI) match the SLAM-like motif motif.

It belongs to the immunoglobulin superfamily. SIGLEC (sialic acid binding Ig-like lectin) family. Expressed specifically on blood cells namely basophil, mast cells and eosinophils.

Its subcellular location is the membrane. In terms of biological role, putative adhesion molecule that mediates sialic-acid dependent binding to blood cells. Preferentially binds to alpha-2,3-linked sialic acid. Also binds to alpha-2,6-linked sialic acid. The sialic acid recognition site may be masked by cis interactions with sialic acids on the same cell surface. Recognizes simultaneously epitopes having a terminal N-acetylneuraminic acid (sialic acid) and an underlying 6-O-sulfated galactose. Preferentially binds to Gal-6-sulfated sialyl-Lewis X glycan epitopes. The sequence is that of Sialic acid-binding Ig-like lectin 8 (SIGLEC8) from Homo sapiens (Human).